The chain runs to 223 residues: Endonuclease V (223 aa).

Mg(2+) is bound by residues Asp35 and Asp103.

Belongs to the endonuclease V family. The cofactor is Mg(2+).

The protein resides in the cytoplasm. It catalyses the reaction Endonucleolytic cleavage at apurinic or apyrimidinic sites to products with a 5'-phosphate.. In terms of biological role, DNA repair enzyme involved in the repair of deaminated bases. Selectively cleaves double-stranded DNA at the second phosphodiester bond 3' to a deoxyinosine leaving behind the intact lesion on the nicked DNA. This chain is Endonuclease V, found in Salmonella paratyphi A (strain ATCC 9150 / SARB42).